Reading from the N-terminus, the 354-residue chain is Homeobox-leucine zipper protein HOX27 (354 aa).

A disordered region spans residues 98–175 (SVAAGAPGME…DDEGASARKK (78 aa)). Positions 148–157 (QGGGGGGGGE) are enriched in gly residues. Residues 171 to 230 (SARKKLRLSKEQSAFLEESFKEHSTLNPKQKVALAKQLNLRPRQVEVWFQNRRARTKLKQ) constitute a DNA-binding region (homeobox). The tract at residues 229–273 (KQTEVDCEYLKRCCETLTEENRRLHKELAELRALKTARPFYMHLP) is leucine-zipper. The disordered stretch occupies residues 294–323 (STSAPAAATSPAAAPTAAARTAVASPEPHR).

This sequence belongs to the HD-ZIP homeobox family. Class II subfamily. In terms of tissue distribution, expressed in seedlings, roots, stems, leaf sheaths and blades and panicles.

It is found in the nucleus. Functionally, probable transcription factor. This Oryza sativa subsp. japonica (Rice) protein is Homeobox-leucine zipper protein HOX27 (HOX27).